A 688-amino-acid chain; its full sequence is Collagen alpha-2(IX) chain (688 aa).

Residues 1 to 22 (MAPAADPRSLLVLLQVLGLALA) form the signal peptide. The tract at residues 26–162 (GLPGEPGPPG…PGKPGRPGTI (137 aa)) is triple-helical region 4 (COL4). Disordered regions lie at residues 26–520 (GLPG…RDAS), 549–578 (GATG…PGPR), and 590–662 (IGNT…LPGF). 2 stretches are compositionally biased toward pro residues: residues 30–42 (EPGP…PPGV) and 105–126 (LPGP…PGPV). A compositionally biased stretch (low complexity) spans 128–138 (LPGEIGLTGPK). Over residues 143 to 156 (PEGPSGPPGPPGKP) the composition is skewed to pro residues. P159 is subject to 4-hydroxyproline. The tract at residues 163–179 (QGLEGSADFLCPTNCPA) is nonhelical region 4 (NC4). O-linked (Xyl...) (glycosaminoglycan) serine glycosylation occurs at S168. Positions 180–518 (GVKGPPGLQG…PGRQGVAGRD (339 aa)) are triple-helical region 3 (COL3). K182 is subject to 5-hydroxylysine. A glycan (O-linked (Gal...) hydroxylysine) is linked at K182. Composition is skewed to low complexity over residues 251–265 (KGMV…SPGE) and 394–412 (PVGQ…EQGP). Positions 435-444 (GPRGGVGDPG) are enriched in gly residues. Residues 497 to 506 (RGLVGDRGLP) are compositionally biased toward low complexity. The tract at residues 519–548 (ASDQHIEDVVLKMLQEQLAEMAVSAKREAL) is nonhelical region 3 (NC3). The triple-helical region 2 (COL2) stretch occupies residues 549 to 631 (GATGMMGPPG…PGLPGRPGQA (83 aa)). Residues 556–565 (PPGPPGPPGY) are compositionally biased toward pro residues. Over residues 598 to 610 (KRGEKGDQGEVGR) the composition is skewed to basic and acidic residues. A nonhelical region 2 (NC2) region spans residues 632–633 (IN). Residues 634–663 (GKDGDRGAPGAPGEAGRPGLPGPIGLPGFC) form a triple-helical region 1 (COL1) region. Low complexity predominate over residues 641 to 651 (APGAPGEAGRP). Residues 664–688 (EPAACLGASAYASGRLTEPGSIKGP) are nonhelical region 1 (NC1).

It belongs to the fibril-associated collagens with interrupted helices (FACIT) family. In terms of assembly, heterotrimer of an alpha 1(IX), an alpha 2(IX) and an alpha 3(IX) chain. The chains are linked to each other by interchain disulfide bonds. Trimers are also cross-linked via hydroxylysines. Post-translationally, prolines at the third position of the tripeptide repeating unit (G-X-Y) are hydroxylated in some or all of the chains. Covalently linked to the telopeptides of type II collagen by hydroxylysine-derived cross-links.

The protein localises to the secreted. Its subcellular location is the extracellular space. It localises to the extracellular matrix. Its function is as follows. Structural component of hyaline cartilage and vitreous of the eye. The sequence is that of Collagen alpha-2(IX) chain from Bos taurus (Bovine).